The primary structure comprises 291 residues: ATP synthase gamma chain (291 aa).

The protein belongs to the ATPase gamma chain family. In terms of assembly, F-type ATPases have 2 components, CF(1) - the catalytic core - and CF(0) - the membrane proton channel. CF(1) has five subunits: alpha(3), beta(3), gamma(1), delta(1), epsilon(1). CF(0) has three main subunits: a, b and c.

The protein resides in the cell inner membrane. Its function is as follows. Produces ATP from ADP in the presence of a proton gradient across the membrane. The gamma chain is believed to be important in regulating ATPase activity and the flow of protons through the CF(0) complex. The protein is ATP synthase gamma chain of Chlorobium phaeobacteroides (strain DSM 266 / SMG 266 / 2430).